Consider the following 514-residue polypeptide: Nuclear hormone receptor family member nhr-85 (514 aa).

Positions 28 to 48 (TSFSSPPATSSSSLLSPSPSS) are disordered. Residues 110 to 186 (TILCQVCSDK…VGMSRDAVRF (77 aa)) constitute a DNA-binding region (nuclear receptor). 2 NR C4-type zinc fingers span residues 113–133 (CQVC…CEGC) and 150–174 (CTRA…LKKC). An NR LBD domain is found at 216–514 (QYENLTEVMH…VSPVPTTLSE (299 aa)). Residues 465-514 (ERPRRISSSGAQEPLNLSLPHVRHQVKRDVDSDEQLEEMKVSPVPTTLSE) are disordered.

It belongs to the nuclear hormone receptor family.

Its subcellular location is the nucleus. Its function is as follows. Orphan nuclear receptor. This chain is Nuclear hormone receptor family member nhr-85 (nhr-85), found in Caenorhabditis elegans.